A 319-amino-acid chain; its full sequence is Ribosomal RNA small subunit methyltransferase H (319 aa).

S-adenosyl-L-methionine-binding positions include 34-36 (GGH), aspartate 54, phenylalanine 83, aspartate 104, and glutamine 111.

Belongs to the methyltransferase superfamily. RsmH family.

It is found in the cytoplasm. The catalysed reaction is cytidine(1402) in 16S rRNA + S-adenosyl-L-methionine = N(4)-methylcytidine(1402) in 16S rRNA + S-adenosyl-L-homocysteine + H(+). Functionally, specifically methylates the N4 position of cytidine in position 1402 (C1402) of 16S rRNA. The protein is Ribosomal RNA small subunit methyltransferase H of Lactiplantibacillus plantarum (strain ATCC BAA-793 / NCIMB 8826 / WCFS1) (Lactobacillus plantarum).